A 489-amino-acid polypeptide reads, in one-letter code: MRTDQVPNTTSEHPAIDLSRVHLIGIGGAGMSGVARILLARGKTVTGSDAKDSRTLLPLRAVGAKIAVGHAAENLELAGELPTVVVTSFAAIPQDNPELVRAREENIPVIRRSDLLGELLEGHRQVLIAGTHGKTSTTSMAVVALQAAGMDPSFAIGGQLNKAGTNAHQGTGEAFVAEADESDASLLRYTPEIAVVTNIEPDHLDFFKTPEAYFQVFEDFADRLTPGGTLVVCLDDPGAAALGERAVARGINAVGYGTVDAVAAHPTVPVKATILSSRVVAEGTYAVLDIDGREVEIILQIPGNHMVLNGAAALLSGYLLGADLDKLAAGLSDFSGVRRRFEYHGTVRGGQFDGASVYDDYAHHPTEVEAVLKAARERVDAAGEGRVIVAFQPHLYSRTLEFAREFAGALSLADAAVLLEIFGAREKPVEGVTSRVITDEMTIPVSYEPNFSAVPDRIAEIAGPADIVLTMGAGSVTMLAPEILDRLRG.

ATP is bound at residue 130-136 (GTHGKTS).

It belongs to the MurCDEF family.

The protein localises to the cytoplasm. It carries out the reaction UDP-N-acetyl-alpha-D-muramate + L-alanine + ATP = UDP-N-acetyl-alpha-D-muramoyl-L-alanine + ADP + phosphate + H(+). It participates in cell wall biogenesis; peptidoglycan biosynthesis. Cell wall formation. The sequence is that of UDP-N-acetylmuramate--L-alanine ligase from Corynebacterium efficiens (strain DSM 44549 / YS-314 / AJ 12310 / JCM 11189 / NBRC 100395).